Reading from the N-terminus, the 121-residue chain is Large ribosomal subunit protein bL20 (121 aa).

This sequence belongs to the bacterial ribosomal protein bL20 family.

Functionally, binds directly to 23S ribosomal RNA and is necessary for the in vitro assembly process of the 50S ribosomal subunit. It is not involved in the protein synthesizing functions of that subunit. The chain is Large ribosomal subunit protein bL20 from Chlamydia caviae (strain ATCC VR-813 / DSM 19441 / 03DC25 / GPIC) (Chlamydophila caviae).